A 353-amino-acid polypeptide reads, in one-letter code: Thiamine-phosphate synthase (353 aa).

The segment at 1–128 (MKSMPVAPIA…AASAAAIRYG (128 aa)) is unknown. The segment at 129 to 353 (LYDLEVTVLQ…TSLQLLEALR (225 aa)) is thiamine-phosphate synthase. Residues 185–189 (QYRNK) and N217 contribute to the 4-amino-2-methyl-5-(diphosphooxymethyl)pyrimidine site. 2 residues coordinate Mg(2+): D218 and D237. S256 provides a ligand contact to 4-amino-2-methyl-5-(diphosphooxymethyl)pyrimidine. 282 to 284 (TAT) contributes to the 2-[(2R,5Z)-2-carboxy-4-methylthiazol-5(2H)-ylidene]ethyl phosphate binding site. Position 285 (K285) interacts with 4-amino-2-methyl-5-(diphosphooxymethyl)pyrimidine. G312 serves as a coordination point for 2-[(2R,5Z)-2-carboxy-4-methylthiazol-5(2H)-ylidene]ethyl phosphate.

It belongs to the thiamine-phosphate synthase family. Mg(2+) serves as cofactor.

The enzyme catalyses 2-[(2R,5Z)-2-carboxy-4-methylthiazol-5(2H)-ylidene]ethyl phosphate + 4-amino-2-methyl-5-(diphosphooxymethyl)pyrimidine + 2 H(+) = thiamine phosphate + CO2 + diphosphate. The catalysed reaction is 2-(2-carboxy-4-methylthiazol-5-yl)ethyl phosphate + 4-amino-2-methyl-5-(diphosphooxymethyl)pyrimidine + 2 H(+) = thiamine phosphate + CO2 + diphosphate. It carries out the reaction 4-methyl-5-(2-phosphooxyethyl)-thiazole + 4-amino-2-methyl-5-(diphosphooxymethyl)pyrimidine + H(+) = thiamine phosphate + diphosphate. It functions in the pathway cofactor biosynthesis; thiamine diphosphate biosynthesis; thiamine phosphate from 4-amino-2-methyl-5-diphosphomethylpyrimidine and 4-methyl-5-(2-phosphoethyl)-thiazole: step 1/1. In terms of biological role, condenses 4-methyl-5-(beta-hydroxyethyl)thiazole monophosphate (THZ-P) and 2-methyl-4-amino-5-hydroxymethyl pyrimidine pyrophosphate (HMP-PP) to form thiamine monophosphate (TMP). This is Thiamine-phosphate synthase from Prochlorococcus marinus (strain MIT 9303).